The following is a 309-amino-acid chain: Protein-L-isoaspartate O-methyltransferase 2 (309 aa).

A Nuclear localization signal motif is present at residues 23 to 28 (KKRKKK). Ser144 is an active-site residue.

The protein belongs to the methyltransferase superfamily. L-isoaspartyl/D-aspartyl protein methyltransferase family. As to expression, expressed in rosette leaves, stems, cauline leaves, flowers and developing seeds.

The protein resides in the nucleus. It catalyses the reaction [protein]-L-isoaspartate + S-adenosyl-L-methionine = [protein]-L-isoaspartate alpha-methyl ester + S-adenosyl-L-homocysteine. In terms of biological role, catalyzes the methyl esterification of L-isoaspartyl residues in peptides and proteins that result from spontaneous decomposition of normal L-aspartyl and L-asparaginyl residues. It plays a role in the repair and/or degradation of damaged proteins. This Arabidopsis thaliana (Mouse-ear cress) protein is Protein-L-isoaspartate O-methyltransferase 2 (PIMT2).